A 1668-amino-acid chain; its full sequence is Probable histone acetyltransferase HAC-like 1 (1668 aa).

Disordered stretches follow at residues 1-34, 459-493, and 528-551; these read MNVG…ADGL, QQQP…SEQG, and KGGQ…HDSQ. Residues 11 to 23 are compositionally biased toward polar residues; sequence GQMSGQAPQTNQV. The segment covering 459–469 has biased composition (low complexity); sequence QQQPNSQHQQS. Polar residues-rich tracts occupy residues 470-491 and 536-551; these read ILRS…QLSE and LSSS…HDSQ. Residues 651 to 732 form a TAZ-type 1 zinc finger; the sequence is AAGNIYYFRQ…DLQCPVCSNA (82 aa). A compositionally biased stretch (basic and acidic residues) spans 886–899; it reads KETSETAPEVKNEA. The segment at 886–912 is disordered; sequence KETSETAPEVKNEANDSTDITVSKSGK. A compositionally biased stretch (polar residues) spans 900-909; it reads NDSTDITVSK. The PHD-type zinc-finger motif lies at 1002–1079; that stretch reads HFFCIPCYNE…EYTCPNCYVE (78 aa). Residues 1094–1530 enclose the CBP/p300-type HAT domain; the sequence is VLGAKDLPRT…VLYHLHNPTA (437 aa). Acetyl-CoA-binding positions include 1217–1219, 1236–1237, and tryptophan 1292; these read LDS and RT. A coiled-coil region spans residues 1342–1365; that stretch reads GAAEDMINQLRQEEDDRKQQKKGK. The segment at 1412–1475 adopts a ZZ-type zinc-finger fold; it reads HLQYSCSHCC…TLHPVDIVGL (64 aa). The Zn(2+) site is built by cysteine 1417, cysteine 1420, cysteine 1432, cysteine 1435, cysteine 1441, cysteine 1444, histidine 1457, and histidine 1465. The TAZ-type 2 zinc-finger motif lies at 1553–1634; the sequence is EVCPDFDLRK…GCNVPRCRDL (82 aa). Residues 1630 to 1650 adopt a coiled-coil conformation; sequence RCRDLKEHLRRLQQQSDSRRR.

Its subcellular location is the nucleus. The enzyme catalyses L-lysyl-[protein] + acetyl-CoA = N(6)-acetyl-L-lysyl-[protein] + CoA + H(+). Its function is as follows. Acetyltransferase enzyme. Acetylates histones, giving a specific tag for transcriptional activation. This Oryza sativa subsp. japonica (Rice) protein is Probable histone acetyltransferase HAC-like 1.